The sequence spans 417 residues: Peptidyl-Asp metalloendopeptidase (417 aa).

An N-terminal signal peptide occupies residues 1 to 23; it reads MKSKSMCTTVGLIAMCLAGSAAA. H331 serves as a coordination point for Zn(2+). E332 is an active-site residue. Positions 335 and 341 each coordinate Zn(2+).

This sequence belongs to the peptidase M72 family. Zn(2+) is required as a cofactor.

It carries out the reaction Cleavage of Xaa-|-Asp, Xaa-|-Glu and Xaa-|-cysteic acid bonds.. In terms of biological role, metalloprotease, specifically cleaves on the N-terminal side of aspartyl, glutamyl and cysteic acid residues. The polypeptide is Peptidyl-Asp metalloendopeptidase (Xanthomonas campestris pv. campestris (strain ATCC 33913 / DSM 3586 / NCPPB 528 / LMG 568 / P 25)).